The following is a 1032-amino-acid chain: Toll-like receptor 9 (1032 aa).

A signal peptide spans 1-25; that stretch reads MVLRRRTLHPLSLLVQAAVLAETLA. Residues 26-818 lie on the Extracellular side of the membrane; that stretch reads LGTLPAFLPC…LCLDEVLSWD (793 aa). Cysteines 35 and 45 form a disulfide. 47–51 lines the DNA pocket; the sequence is WLFLK. 26 LRR repeats span residues 62–85, 87–110, 122–147, 150–166, 167–190, 198–221, 223–242, 243–268, 283–306, 308–332, 333–356, 363–386, 390–413, 415–440, 471–495, 497–520, 521–544, 546–573, 575–599, 601–623, 628–651, 653–676, 677–700, 702–724, 725–748, and 750–773; these read CSNI…DFVH, SNLR…HFSC, MRTL…SLVN, LSHT…LAGL, YSLR…AVKV, LSNL…LPPS, EYLL…DLAN, LTSL…CIEC, LSHL…WFQG, VNLS…AFQN, LTRL…RLHL, LVSL…TLRW, LPKL…IFGT, RALR…TPEE, CKNF…MFVN, SRLQ…QFLP, LTNL…SFSE, PQLQ…SFVT, LSML…LNSN, VRFL…LYLH, LSGL…NLDN, PKSL…SLSF, LPNL…TLPN, TLLQ…FFAL, AVEL…WFGP, and VMNL…AFVD. Asparagine 64 carries an N-linked (GlcNAc...) asparagine glycan. DNA is bound by residues 72 to 77 and 95 to 109; these read SNRIHH and KWNC…LHFS. Residues cysteine 98 and cysteine 110 are joined by a disulfide bond. An N-linked (GlcNAc...) asparagine glycan is attached at asparagine 129. Tyrosine 132 provides a ligand contact to DNA. N-linked (GlcNAc...) asparagine glycosylation is present at asparagine 147. Cysteine 178 and cysteine 184 are disulfide-bonded. 179 to 181 is a DNA binding site; sequence YYK. The N-linked (GlcNAc...) asparagine glycan is linked to asparagine 200. Tyrosine 208 is a binding site for DNA. Residues asparagine 210 and asparagine 242 are each glycosylated (N-linked (GlcNAc...) asparagine). 2 disulfides stabilise this stretch: cysteine 255–cysteine 268 and cysteine 258–cysteine 265. 2 S-palmitoyl cysteine lipidation sites follow: cysteine 258 and cysteine 265. N-linked (GlcNAc...) asparagine glycosylation is found at asparagine 300, asparagine 309, asparagine 332, and asparagine 340. A disordered region spans residues 430–462; that stretch reads PSTLSEATPEEADDAEQEELLSADPHPAPLSTP. The span at 437-450 shows a compositional bias: acidic residues; the sequence is TPEEADDAEQEELL. A disulfide bond links cysteine 471 and cysteine 501. Residues asparagine 495 and asparagine 514 are each glycosylated (N-linked (GlcNAc...) asparagine). Residue asparagine 568 is glycosylated (N-linked (GlcNAc...) asparagine). N-linked (GlcNAc...) asparagine glycans are attached at residues asparagine 670, asparagine 695, and asparagine 700. Residues asparagine 732 and asparagine 752 are each glycosylated (N-linked (GlcNAc...) asparagine). Cystine bridges form between cysteine 765-cysteine 791 and cysteine 767-cysteine 810. Residues 819 to 839 form a helical membrane-spanning segment; the sequence is CFGLSLLAVAVGMVVPILHHL. At 840–1032 the chain is on the cytoplasmic side; the sequence is CGWDVWYCFH…QNFCRGPTAE (193 aa). One can recognise a TIR domain in the interval 868–1013; that stretch reads LPYDAFVVFD…GFWAQLSTAL (146 aa).

This sequence belongs to the Toll-like receptor family. Monomer and homodimer. Exists as a monomer in the absence of unmethylated cytidine-phosphate-guanosine (CpG) ligand. Proteolytic processing of an insertion loop (Z-loop) is required for homodimerization upon binding to the unmethylated CpG ligand leading to its activation. Interacts with MYD88 via their respective TIR domains. Interacts with BTK. Interacts (via transmembrane domain) with UNC93B1. Interacts with CD300LH; the interaction may promote full activation of TLR9-triggered innate responses. Interacts with CNPY3 and HSP90B1; this interaction is required for proper folding in the endoplasmic reticulum. Interacts with SMPDL3B. Interacts with CD82; this interaction is essential for TLR9-dependent myddosome formation in response to CpG stimulation. Post-translationally, activated by proteolytic cleavage of the flexible loop between repeats LRR14 and LRR15 within the ectodomain. Cleavage requires UNC93B1. Proteolytically processed by first removing the majority of the ectodomain by either asparagine endopeptidase (AEP) or a cathepsin followed by a trimming event that is solely cathepsin mediated and required for optimal receptor signaling. Palmitoylated by ZDHHC3 in the Golgi regulates TLR9 trafficking from the Golgi to endosomes. Depalmitoylation by PPT1 controls the release of TLR9 from UNC93B1 in endosomes. As to expression, expressed in the basolateral region of gastric epithelial cells with high levels detected in antrum and body mucosa (at protein level). Detected in spleen and stomach at higher levels in C57BL/6 mice than BALB/C.

It is found in the endoplasmic reticulum membrane. It localises to the endosome. Its subcellular location is the lysosome. The protein localises to the cytoplasmic vesicle. The protein resides in the phagosome. In terms of biological role, key component of innate and adaptive immunity. TLRs (Toll-like receptors) control host immune response against pathogens through recognition of molecular patterns specific to microorganisms. TLR9 is a nucleotide-sensing TLR which is activated by unmethylated cytidine-phosphate-guanosine (CpG) dinucleotides. Acts via MYD88 and TRAF6, leading to NF-kappa-B activation, cytokine secretion and the inflammatory response. Plays a role in defense against systemic mouse cytomegalovirus infection. Controls lymphocyte response to Helicobacter infection. Upon CpG stimulation, induces B-cell proliferation, activation, survival and antibody production. This is Toll-like receptor 9 (Tlr9) from Mus musculus (Mouse).